Consider the following 258-residue polypeptide: Putative [LysW]-aminoadipate/[LysW]-glutamate kinase (258 aa).

Residues 33–34 (GG), R60, and N164 each bind substrate.

This sequence belongs to the acetylglutamate kinase family. LysZ subfamily.

The protein localises to the cytoplasm. It carries out the reaction [amino-group carrier protein]-C-terminal-N-(1,4-dicarboxybutan-1-yl)-L-glutamine + ATP = [amino-group carrier protein]-C-terminal-N-(1-carboxy-5-phosphooxy-5-oxopentan-1-yl)-L-glutamine + ADP. The enzyme catalyses [amino-group carrier protein]-C-terminal-gamma-(L-glutamyl)-L-glutamate + ATP = [amino-group carrier protein]-C-terminal-gamma-(5-phospho-L-glutamyl)-L-glutamate + ADP. Its pathway is amino-acid biosynthesis; L-lysine biosynthesis via AAA pathway; L-lysine from L-alpha-aminoadipate (Thermus route): step 2/5. It participates in amino-acid biosynthesis; L-arginine biosynthesis. Its function is as follows. Involved in both the arginine and lysine biosynthetic pathways. Phosphorylates the LysW-bound precursors glutamate (for arginine biosynthesis), respectively alpha-aminoadipate (for lysine biosynthesis). In Caldivirga maquilingensis (strain ATCC 700844 / DSM 13496 / JCM 10307 / IC-167), this protein is Putative [LysW]-aminoadipate/[LysW]-glutamate kinase.